The sequence spans 392 residues: Autophagy-related protein 21 (392 aa).

WD repeat units lie at residues 200-240 and 250-289; these read VHQS…NDEP and SRPSRISEMKFNHDNTLLACVGESDTIHIFALPVTTTEAD. Positions 246-250 match the L/FRRG motif motif; the sequence is FRRGS.

Belongs to the WD repeat PROPPIN family.

Its subcellular location is the cytoplasm. It is found in the membrane. It localises to the vacuole membrane. Its function is as follows. Required for cytoplasm to vacuole transport (Cvt) vesicles formation and mitophagy. Involved in binding of phosphatidylethanolamine to ATG8 and in recruitment of ATG8 and ATG5 to the pre-autophagosomal structure. Protects ATG8 from ARG4-mediated cleavage. In Kluyveromyces lactis (strain ATCC 8585 / CBS 2359 / DSM 70799 / NBRC 1267 / NRRL Y-1140 / WM37) (Yeast), this protein is Autophagy-related protein 21 (ATG21).